The primary structure comprises 257 residues: Ubiquinone biosynthesis O-methyltransferase (257 aa).

Positions 43, 77, 98, and 144 each coordinate S-adenosyl-L-methionine.

Belongs to the methyltransferase superfamily. UbiG/COQ3 family.

The catalysed reaction is a 3-demethylubiquinol + S-adenosyl-L-methionine = a ubiquinol + S-adenosyl-L-homocysteine + H(+). The enzyme catalyses a 3-(all-trans-polyprenyl)benzene-1,2-diol + S-adenosyl-L-methionine = a 2-methoxy-6-(all-trans-polyprenyl)phenol + S-adenosyl-L-homocysteine + H(+). It participates in cofactor biosynthesis; ubiquinone biosynthesis. In terms of biological role, O-methyltransferase that catalyzes the 2 O-methylation steps in the ubiquinone biosynthetic pathway. The polypeptide is Ubiquinone biosynthesis O-methyltransferase (Psychrobacter cryohalolentis (strain ATCC BAA-1226 / DSM 17306 / VKM B-2378 / K5)).